The following is a 255-amino-acid chain: Probable esterase ATEG_07663 (255 aa).

Active-site charge relay system residues include S122, D200, and H227.

The protein belongs to the LovG family.

Functionally, probable esterase; part of the cluster B that mediates the biosynthesis of azasperpyranones, members of the azaphilone family that exhibit anti-cancer activities. Azasperpyranones are synthesized by 2 clusters, A and B. Cluster A is responsible for the production of the polyhydric phenol moiety while the azaphilonoid scaffold is produced by the cluster B. The non-reducing polyketide synthase ATEG_03629 produces 5-methyl orsellinic acid, which is then reduced to 5-methyl orsellinic aldehyde by the NRPS-like protein ATEG_03630. 5-methyl orsellinic aldehyde is then first hydroxylated by the FAD-dependent monooxygenase ATEG_03635 and subsequently hydroxylated by the cytochrome P450 monooxygenase ATEG_03631 to produce the unstable polyhydric phenol precursor of azasperpyranones. On the other hand, the polyketide synthase ATEG_07659 is responsible for producing the 3,5-dimethyloctadienone moiety from acetyl-CoA, three malonyl-CoA, and two S-adenosyl methionines (SAM). The 3,5-dimethyloctadienone moiety is then loaded onto the SAT domain of ATEG_07661 and extended with four malonyl-CoA and one SAM, which leads to the formation of 2,4-dihydroxy-6-(5,7-dimethyl-2-oxo-trans-3-trans-5-nonadienyl)-3-methylbenzaldehyde (compound 8) after reductive release and aldol condensation. The FAD-dependent monooxygenase ATEG_07662 is the next enzyme in the biosynthesis sequence and hydroxylates the side chain at the benzylic position of compound 8. In Aspergillus nidulans, afoF, the ortholog of the FAD-dependent oxygenase ATEG_07660, is the key enzyme for the biosynthesis of asperfuranone by catalyzing the hydroxylation at C-8 of to prevent the formation of a six-membered ring hemiacetal intermediate and thus facilitating the formation of a five-membered ring to produce asperfuranone. In Aspergillus terreus, ATEG_07660 is probably not functional, which leads to the formation of the six-membered ring hemiacetal intermediate presperpyranone instead of asperfuranone. Finally, ATEG_03636 is involved in the condensation of the polyhydric phenol moiety produced by cluster A and the perasperpyranone precursor produced by cluster B, to yield azasperpyranone A. Further modifications of azasperpyranone A result in the production of derivatives, including azasperpyranone B to F. The sequence is that of Probable esterase ATEG_07663 from Aspergillus terreus (strain NIH 2624 / FGSC A1156).